A 192-amino-acid polypeptide reads, in one-letter code: NF-kappa-B inhibitor-interacting Ras-like protein 1 (192 aa).

11–18 (GLLSVGKT) is a GTP binding site. Residues 35–43 (DCETMEDVY) carry the Effector region motif. Residues 58–93 (HLYDTRGLQEGVELPKHYFSFADGFVLVYSVNNLES) are interactions with NFKBIA and NFKBIB. GTP-binding positions include 61–65 (DTRGL) and 120–123 (NKID). The segment at 168 to 192 (LSQPQSKSSFPLPGRKNKGNSSSEN) is disordered.

Belongs to the small GTPase superfamily. Ras family. KappaB-Ras subfamily. As to quaternary structure, interacts with both NF-kappa-B inhibitor alpha (NFKBIA) and beta (NFKBIB) in vitro. However, it probably only interacts with NFKBIB in vivo. Forms a complex with NFKBIB and NF-kappa-B heterodimer (p50/NFKB1 and p65/RELA). Also interacts with c-Rel (REL).

Its subcellular location is the cytoplasm. Its function is as follows. Atypical Ras-like protein that acts as a potent regulator of NF-kappa-B activity by preventing the degradation of NF-kappa-B inhibitor beta (NFKBIB) by most signals, explaining why NFKBIB is more resistant to degradation. May act by blocking phosphorylation of NFKBIB and mediating cytoplasmic retention of p65/RELA NF-kappa-B subunit. It is unclear whether it acts as a GTPase. Both GTP- and GDP-bound forms block phosphorylation of NFKBIB. The chain is NF-kappa-B inhibitor-interacting Ras-like protein 1 (NKIRAS1) from Macaca fascicularis (Crab-eating macaque).